We begin with the raw amino-acid sequence, 930 residues long: Pyruvate dehydrogenase E1 component (930 aa).

Over residues 1–10 (MTTDFARHDL) the composition is skewed to basic and acidic residues. Positions 1 to 21 (MTTDFARHDLAQNSNSASEPD) are disordered. Lys375 participates in a covalent cross-link: Isoglutamyl lysine isopeptide (Lys-Gln) (interchain with Q-Cter in protein Pup).

In terms of assembly, homodimer. Part of the PDH complex, consisting of multiple copies of AceE (E1), DlaT (E2) and Lpd (E3). Mg(2+) serves as cofactor. Requires thiamine diphosphate as cofactor.

The catalysed reaction is N(6)-[(R)-lipoyl]-L-lysyl-[protein] + pyruvate + H(+) = N(6)-[(R)-S(8)-acetyldihydrolipoyl]-L-lysyl-[protein] + CO2. Component of the pyruvate dehydrogenase (PDH) complex, that catalyzes the overall conversion of pyruvate to acetyl-CoA and CO(2). AceE has reductase activity with pyruvate but does not react with 2-oxoglutarate. In Mycobacterium tuberculosis (strain ATCC 25618 / H37Rv), this protein is Pyruvate dehydrogenase E1 component (aceE).